The chain runs to 185 residues: Intraflagellar transport protein 22 homolog (185 aa).

GTP contacts are provided by residues 10 to 17 (GPCESGKT), 63 to 67 (DCGGD), and 123 to 126 (HKPG). Ser-137 is subject to Phosphoserine.

The protein belongs to the small GTPase superfamily. Rab family. Component of the IFT complex B, at least composed of IFT20, IFT22, IFT25, IFT27, IFT46, IFT52, TRAF3IP1/IFT54, IFT57, IFT74, IFT80, IFT81, and IFT88. Interacts with IFT88. Interacts with CFAP61.

Its subcellular location is the cell projection. It is found in the cilium. Small GTPase-like component of the intraflagellar transport (IFT) complex B. This chain is Intraflagellar transport protein 22 homolog (Ift22), found in Rattus norvegicus (Rat).